Reading from the N-terminus, the 1832-residue chain is Zinc finger protein 646 (1832 aa).

C2H2-type zinc fingers lie at residues 8–31, 48–70, 75–97, 239–261, 266–288, 294–316, 374–396, and 401–424; these read LSCSDCQRHFPSLPELSRHRELLH, YRCQQCGRGYRHPGSLVNHRRTH, FPCTTCGKDFSNPMALKSHMRTH, YKCSQCGKTYKHAGSLTNHRQSH, YPCAICFKEFSNLMALKNHSRLH, YHCPHCPRVFRLPRELLEHQQSH, FRCGDCGRTYRHAGSLINHRKSH, and YPCSLCSKQLFNAAALKNHVRAHH. The interval 26–47 is disordered; the sequence is HRELLHPSPNQDSEEADSIPRP. Positions 94 to 108 are enriched in basic residues; that stretch reads MRTHAPEGRRRHRPP. The disordered stretch occupies residues 94–200; it reads MRTHAPEGRR…TNSARAPPLP (107 aa). A compositionally biased stretch (basic and acidic residues) spans 313 to 329; sequence QQSHEGERQEPRWEEKG. A disordered region spans residues 313-346; it reads QQSHEGERQEPRWEEKGMPTTNGHTDESSQDQLP. A Glycyl lysine isopeptide (Lys-Gly) (interchain with G-Cter in SUMO2) cross-link involves residue Lys-451. 2 consecutive C2H2-type zinc fingers follow at residues 465–487 and 492–514; these read YKCSECGRAYRHRGSLVNHRHSH and YQCSLCPRKYPNLMALRNHVRVH. Residues Lys-534 and Lys-557 each participate in a glycyl lysine isopeptide (Lys-Gly) (interchain with G-Cter in SUMO2) cross-link. The C2H2-type 11 zinc-finger motif lies at 575–597; that stretch reads HICSICGLLFEDAESLERHGLTH. The residue at position 612 (Ser-612) is a Phosphoserine. C2H2-type zinc fingers lie at residues 617-639 and 644-666; these read FACRDCGKSYRHSGSLINHRQTH and FSCGACAKHFHTMAAMKNHLRRH. Residues 660–810 are disordered; that stretch reads KNHLRRHSRR…QPNSSSHSAN (151 aa). Positions 661–678 are enriched in basic residues; it reads NHLRRHSRRRSRRHRKRA. Lys-688 participates in a covalent cross-link: Glycyl lysine isopeptide (Lys-Gly) (interchain with G-Cter in SUMO2). Residues 735–767 are compositionally biased toward basic and acidic residues; sequence EGDKCGLERDETHFQGDKESGGTGEGLERKDAS. Polar residues predominate over residues 798–810; sequence ATGQPNSSSHSAN. C2H2-type zinc fingers lie at residues 821-843, 848-870, and 881-904; these read HTCSDCGHSFPHATGLLSHRPCH, YQCSLCPKEFDSLPALRSHFQNH, and FLCCLCGMIFPGRAGYRLHRRQAH. Residues 901 to 931 form a disordered region; it reads RQAHSSSGMTEGSEEEGEEEGVAEAAPARSP. Over residues 912-922 the composition is skewed to acidic residues; it reads GSEEEGEEEGV. The C2H2-type 17; degenerate zinc-finger motif lies at 958-980; the sequence is HICGCCGQTYDDLGSLERHHQSQ. 2 C2H2-type zinc fingers span residues 1052-1074 and 1079-1101; these read FRCNQCGKTYRHGGSLVNHRKIH and FLCPVCSRCYPNLAAYRNHLRNH. The disordered stretch occupies residues 1103 to 1148; sequence RCKGSEPQVGPIPEAAGSSELQVGPIPEGGSNKPQHMAEEGPGQAE. Residues Lys-1157, Lys-1168, and Lys-1178 each participate in a glycyl lysine isopeptide (Lys-Gly) (interchain with G-Cter in SUMO2) cross-link. 6 consecutive C2H2-type zinc fingers follow at residues 1203-1225, 1230-1252, 1258-1280, 1299-1321, 1326-1348, and 1364-1386; these read FSCEVCGRSYKHAGSLINHRQSH, FGCQACSKGFSNLMSLKNHRRIH, FRCSECGKAFRLRKQLASHQRVH, FRCGQCGRTYRHAGSLLNHRRSH, YSCPTCPKTYSNRMALKDHQRLH, and VRCALCGRSFPGRGSLERHLREH. The segment at 1274-1294 is disordered; that stretch reads ASHQRVHMERRGGGGTRKATR. Disordered regions lie at residues 1377 to 1481 and 1509 to 1529; these read GSLE…WVPQ and TLSHMDSWDNRDNSSQLQPGS. Basic and acidic residues predominate over residues 1378–1393; that stretch reads SLERHLREHEETEREP. The span at 1406–1417 shows a compositional bias: polar residues; the sequence is SEANLTGSQGLE. Over residues 1427–1438 the composition is skewed to basic and acidic residues; the sequence is PHLEDGVPRPGE. The segment covering 1460–1475 has biased composition (gly residues); sequence GKAGGWPVGGGLGNHS. C2H2-type zinc fingers lie at residues 1557-1579, 1585-1607, 1677-1699, 1704-1726, 1732-1754, and 1761-1783; these read HYCLLCSKEFLNPVATKSHSHNH, FACPDCGKAFESHQELASHLQAH, FRCTQCGRSYRHAGSLLNHQKAH, YPCSLCPKLLPNLLSLKNHSRTH, HCCSICGKAFRTAARLEGHGRVH, and FTCPHCPRHFRRRISFVQHQQQH. Residues 1606–1672 are disordered; that stretch reads AHARGHSQVP…QAVTSMAAED (67 aa). Residues 1781-1832 form a disordered region; sequence QQHQEEWTVAGSGAPVAPVTGRGDLPLPPPPTPTTPLLDPSPQWPADLSFSL.

The protein belongs to the krueppel C2H2-type zinc-finger protein family.

It localises to the nucleus. Functionally, may be involved in transcriptional regulation. This chain is Zinc finger protein 646, found in Homo sapiens (Human).